The following is a 120-amino-acid chain: UPF0102 protein COXBURSA331_A1934 (120 aa).

Belongs to the UPF0102 family.

This is UPF0102 protein COXBURSA331_A1934 from Coxiella burnetii (strain RSA 331 / Henzerling II).